The chain runs to 776 residues: Cilium assembly protein DZIP1L (776 aa).

A C2H2-type zinc finger spans residues 166 to 189 (HTCHLCDKTFMNATFLRGHIQRRH). Residues 196-450 (GKQKQEQQLG…RKVLAALRNN (255 aa)) adopt a coiled-coil conformation. Phosphoserine occurs at positions 425 and 426. The segment at 520-776 (SRAKKRWEGT…SGSRPRIPGW (257 aa)) is disordered. Residues 600–618 (GPSSTPVSPGPGLSTPPFS) show a composition bias toward low complexity. The span at 652–683 (WSDSETSEESAQSPGKGSDGLASSATLVQSMV) shows a compositional bias: polar residues. Residues 685–694 (NLEKQLETPA) show a composition bias toward basic and acidic residues. The segment covering 709-721 (TALQRSSTPARKT) has biased composition (polar residues).

Belongs to the DZIP C2H2-type zinc-finger protein family. In terms of assembly, interacts with SEPTIN2.

It is found in the cytoplasm. Its subcellular location is the cytoskeleton. It localises to the cilium basal body. The protein resides in the microtubule organizing center. The protein localises to the centrosome. It is found in the centriole. Involved in primary cilium formation. Probably acts as a transition zone protein required for localization of PKD1/PC1 and PKD2/PC2 to the ciliary membrane. The sequence is that of Cilium assembly protein DZIP1L from Rattus norvegicus (Rat).